Consider the following 323-residue polypeptide: Acetyl esterase (323 aa).

The Involved in the stabilization of the negatively charged intermediate by the formation of the oxyanion hole motif lies at 91–93 (HGG). Active-site residues include S165, D262, and H292.

It belongs to the 'GDXG' lipolytic enzyme family. In terms of assembly, homodimer. Interacts with MalT and MelA.

Its subcellular location is the cytoplasm. In terms of biological role, displays esterase activity towards short chain fatty esters (acyl chain length of up to 8 carbons). Able to hydrolyze triacetylglycerol (triacetin) and tributyrylglycerol (tributyrin), but not trioleylglycerol (triolein) or cholesterol oleate. Negatively regulates MalT activity by antagonizing maltotriose binding. Inhibits MelA galactosidase activity. In Salmonella typhi, this protein is Acetyl esterase.